The sequence spans 479 residues: tRNA-2-methylthio-N(6)-dimethylallyladenosine synthase (479 aa).

In terms of domain architecture, MTTase N-terminal spans 3–120 (KKLYIKTWGC…LPEMVNQVSE (118 aa)). [4Fe-4S] cluster is bound by residues cysteine 12, cysteine 49, cysteine 83, cysteine 157, cysteine 161, and cysteine 164. The region spanning 143-375 (KADGASAFVS…QQRLNQQSMA (233 aa)) is the Radical SAM core domain. One can recognise a TRAM domain in the interval 378–441 (RRMLETEQRI…PNSLRGELIR (64 aa)).

This sequence belongs to the methylthiotransferase family. MiaB subfamily. In terms of assembly, monomer. [4Fe-4S] cluster is required as a cofactor.

It localises to the cytoplasm. The catalysed reaction is N(6)-dimethylallyladenosine(37) in tRNA + (sulfur carrier)-SH + AH2 + 2 S-adenosyl-L-methionine = 2-methylsulfanyl-N(6)-dimethylallyladenosine(37) in tRNA + (sulfur carrier)-H + 5'-deoxyadenosine + L-methionine + A + S-adenosyl-L-homocysteine + 2 H(+). In terms of biological role, catalyzes the methylthiolation of N6-(dimethylallyl)adenosine (i(6)A), leading to the formation of 2-methylthio-N6-(dimethylallyl)adenosine (ms(2)i(6)A) at position 37 in tRNAs that read codons beginning with uridine. The chain is tRNA-2-methylthio-N(6)-dimethylallyladenosine synthase from Idiomarina loihiensis (strain ATCC BAA-735 / DSM 15497 / L2-TR).